A 1001-amino-acid chain; its full sequence is Translation initiation factor IF-2 (1001 aa).

A disordered region spans residues 34–404 (KSHSSTISES…SRGDRRDRKE (371 aa)). Over residues 67–80 (SRPESKEDKSDPKQ) the composition is skewed to basic and acidic residues. 3 stretches are compositionally biased toward pro residues: residues 98–107 (PARPTPPPRP), 147–157 (PTQPLAPPPVP), and 163–172 (PSKPAPPTPP). Residues 173 to 190 (AKKAAPAPRLAGPPGRTA) show a composition bias toward low complexity. 2 stretches are compositionally biased toward basic and acidic residues: residues 212 to 230 (SLKDNRGQARSPGDREEKV) and 238 to 252 (PKPKVELRRPKPPRP). Positions 332–342 (DDDDDDLDIDG) are enriched in acidic residues. Low complexity-rich tracts occupy residues 362 to 371 (KSLAAKPSTP) and 385 to 394 (AGSSAGGSSR). Over residues 395-404 (SRGDRRDRKE) the composition is skewed to basic and acidic residues. Residues 493 to 666 (RRPPVVTIMG…LLVSEVEELV (174 aa)) form the tr-type G domain. Positions 502 to 509 (GHVDHGKT) are G1. Residue 502–509 (GHVDHGKT) coordinates GTP. The G2 stretch occupies residues 527–531 (GITQH). Residues 552–555 (DTPG) form a G3 region. Residues 552 to 556 (DTPGH) and 606 to 609 (NKVD) each bind GTP. Residues 606–609 (NKVD) are G4. A G5 region spans residues 642–644 (SAL).

It belongs to the TRAFAC class translation factor GTPase superfamily. Classic translation factor GTPase family. IF-2 subfamily.

It localises to the cytoplasm. Functionally, one of the essential components for the initiation of protein synthesis. Protects formylmethionyl-tRNA from spontaneous hydrolysis and promotes its binding to the 30S ribosomal subunits. Also involved in the hydrolysis of GTP during the formation of the 70S ribosomal complex. The polypeptide is Translation initiation factor IF-2 (infB) (Synechocystis sp. (strain ATCC 27184 / PCC 6803 / Kazusa)).